A 400-amino-acid chain; its full sequence is Cartilage-associated protein (400 aa).

Positions 1–25 (MGPRSPTAALLVLLCVGCAPTPGRG) are cleaved as a signal peptide. N-linked (GlcNAc...) asparagine glycosylation is found at asparagine 86 and asparagine 362.

The protein belongs to the leprecan family. In terms of tissue distribution, found in articular chondrocytes. Expressed in a variety of tissues.

It localises to the secreted. The protein resides in the extracellular space. Its subcellular location is the extracellular matrix. In terms of biological role, necessary for efficient 3-hydroxylation of fibrillar collagen prolyl residues. This chain is Cartilage-associated protein (Crtap), found in Mus musculus (Mouse).